We begin with the raw amino-acid sequence, 75 residues long: Exodeoxyribonuclease 7 small subunit (75 aa).

It belongs to the XseB family. In terms of assembly, heterooligomer composed of large and small subunits.

Its subcellular location is the cytoplasm. It carries out the reaction Exonucleolytic cleavage in either 5'- to 3'- or 3'- to 5'-direction to yield nucleoside 5'-phosphates.. Functionally, bidirectionally degrades single-stranded DNA into large acid-insoluble oligonucleotides, which are then degraded further into small acid-soluble oligonucleotides. This chain is Exodeoxyribonuclease 7 small subunit, found in Listeria innocua serovar 6a (strain ATCC BAA-680 / CLIP 11262).